Consider the following 149-residue polypeptide: Nucleoside diphosphate kinase (149 aa).

ATP is bound by residues lysine 9, phenylalanine 57, arginine 85, threonine 91, arginine 102, and asparagine 112. The active-site Pros-phosphohistidine intermediate is histidine 115.

Belongs to the NDK family. In terms of assembly, homotetramer. Mg(2+) serves as cofactor.

It localises to the cytoplasm. It catalyses the reaction a 2'-deoxyribonucleoside 5'-diphosphate + ATP = a 2'-deoxyribonucleoside 5'-triphosphate + ADP. The enzyme catalyses a ribonucleoside 5'-diphosphate + ATP = a ribonucleoside 5'-triphosphate + ADP. Its function is as follows. Major role in the synthesis of nucleoside triphosphates other than ATP. The ATP gamma phosphate is transferred to the NDP beta phosphate via a ping-pong mechanism, using a phosphorylated active-site intermediate. This Nostoc sp. (strain PCC 7120 / SAG 25.82 / UTEX 2576) protein is Nucleoside diphosphate kinase.